A 305-amino-acid polypeptide reads, in one-letter code: Superkiller complex protein 8 (305 aa).

M1 is modified (N-acetylmethionine). T2 carries the post-translational modification N-acetylthreonine; in WD repeat-containing protein 61, N-terminally processed. 7 WD repeats span residues 14 to 57 (AHDD…LELQ), 62 to 101 (GHQLGVVSVDISHTLPIAASSSLDAHIRLWDLENGKQMKS), 104 to 143 (AGPVDAWTLAFSPDSQYLATGTHMGKVNIFGVESGKKEYS), 146 to 187 (TRGK…HTLE), 188 to 227 (GHAMPIRSLTFSPDSQLLVTASDDGYIKIYDVQHANLAGT), 230 to 269 (GHASWVLNVAFCPDDTHFVSSSSDKSVKVWDVGTRTCIHT), and 272 to 305 (DHQDQVWGVKYNGNGSKIVSVGDDQEIHVYDCPI).

Belongs to the SKI8 family. In terms of assembly, component of the PAF1 complex, which consists of CDC73, PAF1, LEO1, CTR9, RTF1 and SKIC8. The PAF1 complex interacts with PHF5A. Within the PAF1 complex interacts directly with PHF5A. Component of the SKI complex which consists of SKIC2, SKIC3 and SKIC8.

Its subcellular location is the nucleus. It is found in the cytoplasm. Functionally, component of the PAF1 complex (PAF1C) which has multiple functions during transcription by RNA polymerase II and is implicated in regulation of development and maintenance of embryonic stem cell pluripotency. PAF1C associates with RNA polymerase II through interaction with POLR2A CTD non-phosphorylated and 'Ser-2'- and 'Ser-5'-phosphorylated forms and is involved in transcriptional elongation, acting both independently and synergistically with TCEA1 and in cooperation with the DSIF complex and HTATSF1. PAF1C is required for transcription of Hox and Wnt target genes. PAF1C is involved in hematopoiesis and stimulates transcriptional activity of KMT2A/MLL1; it promotes leukemogenesis through association with KMT2A/MLL1-rearranged oncoproteins, such as KMT2A/MLL1-MLLT3/AF9 and KMT2A/MLL1-MLLT1/ENL. PAF1C is involved in histone modifications such as ubiquitination of histone H2B and methylation on histone H3 'Lys-4' (H3K4me3). PAF1C recruits the RNF20/40 E3 ubiquitin-protein ligase complex and the E2 enzyme UBE2A or UBE2B to chromatin which mediate monoubiquitination of 'Lys-120' of histone H2B (H2BK120ub1); UB2A/B-mediated H2B ubiquitination is proposed to be coupled to transcription. PAF1C is involved in mRNA 3' end formation probably through association with cleavage and poly(A) factors. In case of infection by influenza A strain H3N2, PAF1C associates with viral NS1 protein, thereby regulating gene transcription. Required for mono- and trimethylation on histone H3 'Lys-4' (H3K4me3), dimethylation on histone H3 'Lys-79' (H3K4me3). Required for Hox gene transcription. Also acts as a component of the SKI complex, a multiprotein complex that assists the RNA-degrading exosome during the mRNA decay and quality-control pathways. The SKI complex catalyzes mRNA extraction from 80S ribosomal complexes in the 3'-5' direction and channels mRNA to the cytosolic exosome for degradation. SKI-mediated extraction of mRNA from stalled ribosomes allow binding of the Pelota-HBS1L complex and subsequent ribosome disassembly by ABCE1 for ribosome recycling. The sequence is that of Superkiller complex protein 8 (Skic8) from Mus musculus (Mouse).